Consider the following 406-residue polypeptide: Cysteine desulfurase (406 aa).

K226 bears the N6-(pyridoxal phosphate)lysine mark. Catalysis depends on C364, which acts as the Cysteine persulfide intermediate.

This sequence belongs to the class-V pyridoxal-phosphate-dependent aminotransferase family. Csd subfamily. Homodimer. Interacts with SufE and the SufBCD complex composed of SufB, SufC and SufD. The interaction with SufE is required to mediate the direct transfer of the sulfur atom from the S-sulfanylcysteine. It depends on pyridoxal 5'-phosphate as a cofactor.

Its subcellular location is the cytoplasm. The catalysed reaction is (sulfur carrier)-H + L-cysteine = (sulfur carrier)-SH + L-alanine. The enzyme catalyses L-selenocysteine + AH2 = hydrogenselenide + L-alanine + A + H(+). It participates in cofactor biosynthesis; iron-sulfur cluster biosynthesis. Functionally, cysteine desulfurases mobilize the sulfur from L-cysteine to yield L-alanine, an essential step in sulfur metabolism for biosynthesis of a variety of sulfur-containing biomolecules. Component of the suf operon, which is activated and required under specific conditions such as oxidative stress and iron limitation. Acts as a potent selenocysteine lyase in vitro, that mobilizes selenium from L-selenocysteine. Selenocysteine lyase activity is however unsure in vivo. The protein is Cysteine desulfurase of Escherichia coli O9:H4 (strain HS).